The following is a 163-amino-acid chain: Glycine cleavage system H-like protein gcvH5, mitochondrial (163 aa).

The transit peptide at 1 to 23 directs the protein to the mitochondrion; the sequence is MFLFKTTNNLRKSLSNKFFCTRY. The region spanning 50–136 is the Lipoyl-binding domain; it reads IGTLGLTENG…MSKGWLCKIK (87 aa).

The protein belongs to the GcvH family.

It localises to the mitochondrion. The chain is Glycine cleavage system H-like protein gcvH5, mitochondrial (gcvH5) from Dictyostelium discoideum (Social amoeba).